Reading from the N-terminus, the 138-residue chain is NADH-quinone oxidoreductase subunit A (138 aa).

3 consecutive transmembrane segments (helical) span residues 8–28 (FGAV…GYLT), 63–83 (FYVV…LFPW), and 93–113 (FALI…AYAW).

This sequence belongs to the complex I subunit 3 family. In terms of assembly, NDH-1 is composed of 14 different subunits. Subunits NuoA, H, J, K, L, M, N constitute the membrane sector of the complex.

The protein resides in the cell inner membrane. It catalyses the reaction a quinone + NADH + 5 H(+)(in) = a quinol + NAD(+) + 4 H(+)(out). NDH-1 shuttles electrons from NADH, via FMN and iron-sulfur (Fe-S) centers, to quinones in the respiratory chain. The immediate electron acceptor for the enzyme in this species is believed to be a menaquinone. Couples the redox reaction to proton translocation (for every two electrons transferred, four hydrogen ions are translocated across the cytoplasmic membrane), and thus conserves the redox energy in a proton gradient. In Prosthecochloris aestuarii (strain DSM 271 / SK 413), this protein is NADH-quinone oxidoreductase subunit A.